Consider the following 94-residue polypeptide: Phosphoribosyl-ATP pyrophosphatase (94 aa).

This sequence belongs to the PRA-PH family.

It localises to the cytoplasm. It catalyses the reaction 1-(5-phospho-beta-D-ribosyl)-ATP + H2O = 1-(5-phospho-beta-D-ribosyl)-5'-AMP + diphosphate + H(+). It functions in the pathway amino-acid biosynthesis; L-histidine biosynthesis; L-histidine from 5-phospho-alpha-D-ribose 1-diphosphate: step 2/9. This chain is Phosphoribosyl-ATP pyrophosphatase (hisE), found in Pyrobaculum aerophilum (strain ATCC 51768 / DSM 7523 / JCM 9630 / CIP 104966 / NBRC 100827 / IM2).